The sequence spans 294 residues: uncharacterized protein (294 aa).

Disordered regions lie at residues 1-148 (MFLR…LEKP) and 268-294 (DEAA…GKGL). S34 and S35 each carry phosphoserine. Low complexity predominate over residues 35 to 44 (SSENSGSDWD). Positions 52–62 (DVGHPKTKDSG) are enriched in basic and acidic residues. 2 positions are modified to phosphoserine: S71 and S90. Basic and acidic residues-rich tracts occupy residues 73 to 92 (PSKE…DSLK) and 278 to 294 (GLER…GKGL).

This is an uncharacterized protein from Homo sapiens (Human).